The sequence spans 215 residues: Small ribosomal subunit protein uS3 (215 aa).

The 69-residue stretch at 38–106 (LRAFLKKKLF…EVLIDIQEIR (69 aa)) folds into the KH type-2 domain.

This sequence belongs to the universal ribosomal protein uS3 family. Part of the 30S ribosomal subunit. Forms a tight complex with proteins S10 and S14.

Binds the lower part of the 30S subunit head. Binds mRNA in the 70S ribosome, positioning it for translation. The chain is Small ribosomal subunit protein uS3 from Desulforapulum autotrophicum (strain ATCC 43914 / DSM 3382 / VKM B-1955 / HRM2) (Desulfobacterium autotrophicum).